A 495-amino-acid chain; its full sequence is Glycerol kinase (495 aa).

T13 lines the ADP pocket. Positions 13, 14, and 15 each coordinate ATP. T13 contacts sn-glycerol 3-phosphate. R17 contributes to the ADP binding site. R83, E84, Y135, and D244 together coordinate sn-glycerol 3-phosphate. R83, E84, Y135, D244, and Q245 together coordinate glycerol. ADP is bound by residues T266 and G309. ATP is bound by residues T266, G309, Q313, and G410. The ADP site is built by G410 and N414.

Belongs to the FGGY kinase family.

It carries out the reaction glycerol + ATP = sn-glycerol 3-phosphate + ADP + H(+). Its pathway is polyol metabolism; glycerol degradation via glycerol kinase pathway; sn-glycerol 3-phosphate from glycerol: step 1/1. Its activity is regulated as follows. Inhibited by fructose 1,6-bisphosphate (FBP). Its function is as follows. Key enzyme in the regulation of glycerol uptake and metabolism. Catalyzes the phosphorylation of glycerol to yield sn-glycerol 3-phosphate. This Shewanella amazonensis (strain ATCC BAA-1098 / SB2B) protein is Glycerol kinase.